Reading from the N-terminus, the 122-residue chain is Large ribosomal subunit protein uL14 (122 aa).

Belongs to the universal ribosomal protein uL14 family. In terms of assembly, part of the 50S ribosomal subunit. Forms a cluster with proteins L3 and L19. In the 70S ribosome, L14 and L19 interact and together make contacts with the 16S rRNA in bridges B5 and B8.

In terms of biological role, binds to 23S rRNA. Forms part of two intersubunit bridges in the 70S ribosome. In Alteromonas mediterranea (strain DSM 17117 / CIP 110805 / LMG 28347 / Deep ecotype), this protein is Large ribosomal subunit protein uL14.